The sequence spans 64 residues: Disintegrin VB7A (64 aa).

The Disintegrin domain occupies 1-64; sequence NSGNPCCDPV…SDCPRNPYKD (64 aa). Intrachain disulfides connect Cys-6–Cys-29, Cys-20–Cys-26, Cys-25–Cys-50, and Cys-38–Cys-57. Residues 42 to 44 carry the Cell attachment site motif; it reads RGD.

It belongs to the disintegrin family. Dimeric disintegrin subfamily. In terms of assembly, heterodimer with VB7B; disulfide-linked. Expressed by the venom gland.

The protein resides in the secreted. Functionally, poor inhibitor of platelet aggregation. The disintegrin inhibits the adhesion of cells expressing the RGD-dependent integrin alpha-5/beta-1 (ITGA5/ITGB1) to immobilized fibronectin. Inhibition on alpha-2b/beta-3 (ITGA2B/ITGB3) is low. This is Disintegrin VB7A from Vipera berus berus (Common viper).